The chain runs to 272 residues: Ribosomal RNA small subunit methyltransferase A (272 aa).

Residues N18, L20, G45, E66, D91, and N113 each contribute to the S-adenosyl-L-methionine site.

It belongs to the class I-like SAM-binding methyltransferase superfamily. rRNA adenine N(6)-methyltransferase family. RsmA subfamily.

It is found in the cytoplasm. It carries out the reaction adenosine(1518)/adenosine(1519) in 16S rRNA + 4 S-adenosyl-L-methionine = N(6)-dimethyladenosine(1518)/N(6)-dimethyladenosine(1519) in 16S rRNA + 4 S-adenosyl-L-homocysteine + 4 H(+). Functionally, specifically dimethylates two adjacent adenosines (A1518 and A1519) in the loop of a conserved hairpin near the 3'-end of 16S rRNA in the 30S particle. May play a critical role in biogenesis of 30S subunits. The sequence is that of Ribosomal RNA small subunit methyltransferase A from Yersinia pseudotuberculosis serotype O:1b (strain IP 31758).